Consider the following 338-residue polypeptide: MKKVERFEVPRTIIFGPGALEKTPEVIPPSGRVLIITGKSSTRKYAERVAELLKQNCEIISYDQVELEKPGFDLVIGIGGGRPLDMAKVYSYIHKKPFVAIPTSASHDGIASPYVSFSLTQRFSKYGKISSSPVAIIADTSIILSAPSRLLKAGIGDLLGKIIAVRDWQLAHRLKGEEYSEYAAHLSLTSYKIAVGNAQKIKNFIREEDVRVLVKALIGCGVAMGIAGSSRPCSGSEHLFAHAIEVRVEKEDEVVHGELVALGTIIMAYLHGINWRRIKRIADIIGLPTSLRQANIDVDLALEALTTAHTLRPDRYTILGDGLSREAAKRALEDVELI.

Residues 81 to 85 and 103 to 106 contribute to the NAD(+) site; these read GRPLD and TSAS. D108 is a binding site for substrate. Residue S112 coordinates NAD(+). Residue D157 participates in substrate binding. Zn(2+) is bound by residues D157 and H238. H242 lines the substrate pocket. H256 is a Zn(2+) binding site.

Belongs to the glycerol-1-phosphate dehydrogenase family. In terms of assembly, homodimer. It depends on Zn(2+) as a cofactor.

It is found in the cytoplasm. It catalyses the reaction sn-glycerol 1-phosphate + NAD(+) = dihydroxyacetone phosphate + NADH + H(+). It carries out the reaction sn-glycerol 1-phosphate + NADP(+) = dihydroxyacetone phosphate + NADPH + H(+). It functions in the pathway membrane lipid metabolism; glycerophospholipid metabolism. In terms of biological role, catalyzes the NAD(P)H-dependent reduction of dihydroxyacetonephosphate (DHAP or glycerone phosphate) to glycerol 1-phosphate (G1P). The G1P thus generated is used as the glycerophosphate backbone of phospholipids in the cellular membranes of Archaea. The chain is Glycerol-1-phosphate dehydrogenase [NAD(P)+] from Pyrobaculum calidifontis (strain DSM 21063 / JCM 11548 / VA1).